A 418-amino-acid chain; its full sequence is EPS I polysaccharide export inner membrane protein EpsF (418 aa).

10 helical membrane-spanning segments follow: residues 21-41 (VLVV…FPIA), 45-65 (CAAI…LATA), 142-162 (PLMV…IAIY), 170-190 (YVVF…GSAI), 222-242 (AGTH…MLFL), 262-282 (LLVL…EFVM), 296-316 (SAWE…AWLF), 326-346 (LTYF…PAVG), 347-367 (ARLF…FFFA), and 377-397 (KTLA…IVDV).

This sequence to S.marcescens SfuB.

The protein resides in the cell inner membrane. Functionally, probably involved in polymerization and/or export of exopolysaccharide EPS I which functions as a virulence factor. May play a role in export of EPS I or its intermediates across the membranes. The sequence is that of EPS I polysaccharide export inner membrane protein EpsF (epsF) from Ralstonia solanacearum (Pseudomonas solanacearum).